The following is a 377-amino-acid chain: Spore coat protein SA (377 aa).

It belongs to the glycosyltransferase group 1 family. Glycosyltransferase 4 subfamily.

This is Spore coat protein SA (cotSA) from Bacillus subtilis (strain 168).